A 57-amino-acid chain; its full sequence is Non-structural protein 3a (57 aa).

The signal sequence occupies residues 1–22; that stretch reads MIQSPTSFLIVLILLWCKLVLS.

Its function is as follows. Involved in resistance to IFN. The chain is Non-structural protein 3a from Avian infectious bronchitis virus (strain Portugal/322/82) (IBV).